Reading from the N-terminus, the 418-residue chain is Pestheic acid cluster transcriptional regulator 1 (418 aa).

Residues 244–272 (GTAVTTTATTSSSFISKSSEEPSPKRIKP) form a disordered region. Positions 245-260 (TAVTTTATTSSSFISK) are enriched in low complexity.

It is found in the nucleus. Its function is as follows. Transcription factor that, with ptaR2 and ptaR3, coregulates the expression of the gene cluster that mediates the biosynthesis of pestheic acid, a diphenyl ether which is a biosynthetic precursor of the unique chloropupukeananes. The chain is Pestheic acid cluster transcriptional regulator 1 from Pestalotiopsis fici (strain W106-1 / CGMCC3.15140).